The sequence spans 216 residues: Ras-like protein rasW (216 aa).

16-23 (GDGGVGKT) lines the GTP pocket. The short motif at 38-46 (YDPTIEDSY) is the Effector region element. Residues 63-67 (DTAGQ) and 122-125 (NKID) each bind GTP. The segment at 171–193 (KRKEDPQSHKPSKDSDSKKPLVN) is disordered. A compositionally biased stretch (basic and acidic residues) spans 172 to 189 (RKEDPQSHKPSKDSDSKK). A Cysteine methyl ester modification is found at Cys213. The S-geranylgeranyl cysteine moiety is linked to residue Cys213. The propeptide at 214 to 216 (KMM) is removed in mature form.

Belongs to the small GTPase superfamily. Ras family.

The protein resides in the cell membrane. The enzyme catalyses GTP + H2O = GDP + phosphate + H(+). Ras proteins bind GDP/GTP and possess intrinsic GTPase activity. This chain is Ras-like protein rasW (rasW), found in Dictyostelium discoideum (Social amoeba).